The following is a 184-amino-acid chain: MPHFHYSLTDEQAAELVFKKYGVRITPEQIAKAYAPEQRMSWKKSVEVARFIKGMTLKQAKAWLEDVVKLKRPIPIKTFKKKQAHHATPWEGWPVAKWPVKVAKRYLQLLENLENNAKFKGLDVERLVIIHAAAHKGIKIPNIMPRAFGRATPFNEETVNVEIVAAELPKEVVPKRYKLNLVKR.

It belongs to the universal ribosomal protein uL22 family. In terms of assembly, part of the 50S ribosomal subunit.

This protein binds specifically to 23S rRNA. It makes multiple contacts with different domains of the 23S rRNA in the assembled 50S subunit and ribosome. Functionally, the globular domain of the protein is located near the polypeptide exit tunnel on the outside of the subunit, while an extended beta-hairpin is found that lines the wall of the exit tunnel in the center of the 70S ribosome. This is Large ribosomal subunit protein uL22 from Pyrobaculum calidifontis (strain DSM 21063 / JCM 11548 / VA1).